The sequence spans 408 residues: Histidine--tRNA ligase (408 aa).

Belongs to the class-II aminoacyl-tRNA synthetase family. Homodimer.

The protein localises to the cytoplasm. The catalysed reaction is tRNA(His) + L-histidine + ATP = L-histidyl-tRNA(His) + AMP + diphosphate + H(+). In Campylobacter jejuni subsp. jejuni serotype O:23/36 (strain 81-176), this protein is Histidine--tRNA ligase.